Here is a 257-residue protein sequence, read N- to C-terminus: 3-methyl-2-oxobutanoate hydroxymethyltransferase (257 aa).

Residues D42 and D86 each coordinate Mg(2+). 3-methyl-2-oxobutanoate contacts are provided by residues 42–43 (DS), D86, and K116. Residue E118 coordinates Mg(2+). E185 acts as the Proton acceptor in catalysis.

This sequence belongs to the PanB family. As to quaternary structure, homodecamer; pentamer of dimers. Mg(2+) is required as a cofactor.

The protein resides in the cytoplasm. It carries out the reaction 3-methyl-2-oxobutanoate + (6R)-5,10-methylene-5,6,7,8-tetrahydrofolate + H2O = 2-dehydropantoate + (6S)-5,6,7,8-tetrahydrofolate. The protein operates within cofactor biosynthesis; (R)-pantothenate biosynthesis; (R)-pantoate from 3-methyl-2-oxobutanoate: step 1/2. Functionally, catalyzes the reversible reaction in which hydroxymethyl group from 5,10-methylenetetrahydrofolate is transferred onto alpha-ketoisovalerate to form ketopantoate. This is 3-methyl-2-oxobutanoate hydroxymethyltransferase from Prochlorococcus marinus (strain MIT 9312).